The primary structure comprises 233 residues: 5'-methylthioadenosine/S-adenosylhomocysteine nucleosidase (233 aa).

The Proton acceptor role is filled by glutamate 12. Substrate contacts are provided by residues glycine 78, isoleucine 156, and 177 to 178; that span reads ME. Catalysis depends on aspartate 201, which acts as the Proton donor.

The protein belongs to the PNP/UDP phosphorylase family. MtnN subfamily.

The catalysed reaction is S-adenosyl-L-homocysteine + H2O = S-(5-deoxy-D-ribos-5-yl)-L-homocysteine + adenine. The enzyme catalyses S-methyl-5'-thioadenosine + H2O = 5-(methylsulfanyl)-D-ribose + adenine. It catalyses the reaction 5'-deoxyadenosine + H2O = 5-deoxy-D-ribose + adenine. It functions in the pathway amino-acid biosynthesis; L-methionine biosynthesis via salvage pathway; S-methyl-5-thio-alpha-D-ribose 1-phosphate from S-methyl-5'-thioadenosine (hydrolase route): step 1/2. Functionally, catalyzes the irreversible cleavage of the glycosidic bond in both 5'-methylthioadenosine (MTA) and S-adenosylhomocysteine (SAH/AdoHcy) to adenine and the corresponding thioribose, 5'-methylthioribose and S-ribosylhomocysteine, respectively. Also cleaves 5'-deoxyadenosine, a toxic by-product of radical S-adenosylmethionine (SAM) enzymes, into 5-deoxyribose and adenine. The chain is 5'-methylthioadenosine/S-adenosylhomocysteine nucleosidase from Listeria welshimeri serovar 6b (strain ATCC 35897 / DSM 20650 / CCUG 15529 / CIP 8149 / NCTC 11857 / SLCC 5334 / V8).